We begin with the raw amino-acid sequence, 358 residues long: MQKNDDLLRERRKDEHVALGVKQNEQLAPSSLKDIQLIGTSIPRYNVKDIDLTTTIFGKNVPFPFYINAMTGGSRHTKKINAELAEIAREVAIPMAVGSQSAALKNSSLIDTYNIVREINPNGMILANVSPEVAIQDGLQAIEMLEANALQIHINPAQELVMQEGDRSFSHWLTRIEEYVKLSPVPIVVKEVGFGMTRETVKTLADIGVQTVDLAGKGGTNFAQIENDRRRDQAYDFLLDWGISTGQALIDMQHQDAPKIAYLASGGIRNPLDIIKALALGADSVGMAGQIIYSLKKEGVTKTIEKLELWKEQLRGLFVLANAKNIAELKTTPLIVSGELAKWGTLREINLVKLANRK.

Position 12 to 13 (12 to 13 (RK)) interacts with substrate. Residues 69 to 71 (AMT), serine 99, and asparagine 128 contribute to the FMN site. Glutamine 158 provides a ligand contact to substrate. Mg(2+) is bound at residue glutamate 159. Residues lysine 190, threonine 220, 267-269 (GIR), and 288-289 (AG) each bind FMN.

The protein belongs to the IPP isomerase type 2 family. In terms of assembly, homooctamer. Dimer of tetramers. FMN is required as a cofactor. NADPH serves as cofactor. Requires Mg(2+) as cofactor.

The protein resides in the cytoplasm. It catalyses the reaction isopentenyl diphosphate = dimethylallyl diphosphate. In terms of biological role, involved in the biosynthesis of isoprenoids. Catalyzes the 1,3-allylic rearrangement of the homoallylic substrate isopentenyl (IPP) to its allylic isomer, dimethylallyl diphosphate (DMAPP). The chain is Isopentenyl-diphosphate delta-isomerase from Listeria monocytogenes serovar 1/2a (strain ATCC BAA-679 / EGD-e).